A 551-amino-acid polypeptide reads, in one-letter code: Probable NADH-ubiquinone oxidoreductase C947.15c, mitochondrial (551 aa).

Residues 1-35 (MSVSKARLQSVVRLSRTVPYSKTMVRSFHVSCAVK) constitute a mitochondrion transit peptide. 92–122 (NIVVLGSGWGAVAAIKNLDPSLYNITLVSPR) is a binding site for FAD. 255–291 (LHITVVGGGPTGMEFAAEMQDFIDNDVKDMFPELQKD) is a binding site for NAD(+).

It belongs to the NADH dehydrogenase family.

Its subcellular location is the mitochondrion. It catalyses the reaction a quinone + NADH + H(+) = a quinol + NAD(+). It carries out the reaction a ubiquinone + NADH + H(+) = a ubiquinol + NAD(+). Catalyzes the oxidation of NADH. The protein is Probable NADH-ubiquinone oxidoreductase C947.15c, mitochondrial of Schizosaccharomyces pombe (strain 972 / ATCC 24843) (Fission yeast).